A 138-amino-acid polypeptide reads, in one-letter code: Ferredoxin-2 (138 aa).

Positions 27-117 (ADANLQSTDF…DAKIVYNLKH (91 aa)) constitute a 2Fe-2S ferredoxin-type domain. Cys-62, Cys-67, Cys-70, and Cys-100 together coordinate [2Fe-2S] cluster.

Belongs to the 2Fe2S plant-type ferredoxin family. The cofactor is [2Fe-2S] cluster.

Ferredoxins are iron-sulfur proteins that transfer electrons in a wide variety of metabolic reactions. The chain is Ferredoxin-2 (fer2) from Haloarcula marismortui (strain ATCC 43049 / DSM 3752 / JCM 8966 / VKM B-1809) (Halobacterium marismortui).